The chain runs to 336 residues: MKPQVGINGFGRIGRLVLRAAVASNSVNVVAVNDPFIDLEYMVYMFKYDSAHGRYKGDVKVDGGKLVIDSHRITVFQEMSASAVPWSQAGAEYIVESTGINTTVEKASAHFQGGAKKVIISAPSADSSHVRVGVNHEKYDPSMKVVSNASCTTNCLAPLAKVINDNFGIVEGLMTTVHSYTATQKVVDGPSKKAWRDGRTAAQNIVPASTGAAKRVGKVIPELNGKLTGMAFRVPTPNVSVVDLTCKLSKPATYDQIKAAVKRASESSALKRILEYTEDQVVSTDFLSTTCSSTFDARAGIALNDTFVKLIAWYDNEFGYSCRVVDLISYMFKRDH.

NAD(+)-binding positions include 12-13, aspartate 34, and methionine 79; that span reads RI. Residues 150–152, threonine 181, 210–211, and arginine 233 each bind D-glyceraldehyde 3-phosphate; these read SCT and TG. The Nucleophile role is filled by cysteine 151. Residue asparagine 316 participates in NAD(+) binding.

It belongs to the glyceraldehyde-3-phosphate dehydrogenase family. Homotetramer.

The protein localises to the cytoplasm. It carries out the reaction D-glyceraldehyde 3-phosphate + phosphate + NAD(+) = (2R)-3-phospho-glyceroyl phosphate + NADH + H(+). The protein operates within carbohydrate degradation; glycolysis; pyruvate from D-glyceraldehyde 3-phosphate: step 1/5. The chain is Glyceraldehyde-3-phosphate dehydrogenase from Echinococcus multilocularis (Fox tapeworm).